Here is a 624-residue protein sequence, read N- to C-terminus: Chitin elicitor receptor kinase 1 (624 aa).

Positions 1–18 (MEASTSLLVLVLAAAAFA) are cleaved as a signal peptide. Topologically, residues 19–240 (AGTVTEAAGD…SPGKGASAGA (222 aa)) are extracellular. 3 disulfide bridges follow: Cys30-Cys93, Cys34-Cys160, and Cys91-Cys158. Asn48 is a glycosylation site (N-linked (GlcNAc...) asparagine). Position 115–121 (115–121 (RGQIYTS)) interacts with chitin. Asn128 carries N-linked (GlcNAc...) asparagine glycosylation. 142–148 (PANNIPD) provides a ligand contact to chitin. N-linked (GlcNAc...) asparagine glycosylation is found at Asn153 and Asn157. The 46-residue stretch at 173–218 (LTYPLRAEDTLASVAATYGLSSQLDVVRRYNPGMESATGSGIVYIP) folds into the LysM domain. A glycan (N-linked (GlcNAc...) asparagine) is linked at Asn223. The helical transmembrane segment at 241–261 (IAGGVVAGVVVLAAIFLYIIF) threads the bilayer. Over 262 to 624 (YRRRKAKQAT…QGLVNLMSGR (363 aa)) the chain is Cytoplasmic. The Protein kinase domain occupies 324 to 599 (FSIGNKIGQG…RSVVVALMTL (276 aa)). ATP is bound by residues 330-338 (IGQGGFGAV) and Lys351. The active-site Proton acceptor is the Asp443.

It belongs to the protein kinase superfamily. Ser/Thr protein kinase family. As to quaternary structure, homooligomer. Interacts with CEBIP. Interacts with LYP4 and LYP6. Interacts with RLCK176. In terms of processing, autophosphorylated; induced by chitin and derivatives. As to expression, expressed in seedlings, roots, shoots and stems, and, to a lower extent, in flowers.

It localises to the cell membrane. It catalyses the reaction L-seryl-[protein] + ATP = O-phospho-L-seryl-[protein] + ADP + H(+). The enzyme catalyses L-threonyl-[protein] + ATP = O-phospho-L-threonyl-[protein] + ADP + H(+). Functionally, lysin motif (LysM) receptor kinase required as a cell surface receptor for chitin elicitor (chitooligosaccharides) signaling leading to innate immunity in response to biotic stresses. Involved in the resistance to pathogenic fungi, probably by sensing microbe-associated molecular patterns (MAMP) and pathogen-associated molecular patterns (PAMP). Involved in the detection of microbial peptidoglycans (PGNs) and mediates PGN response. Plays dual roles in PGN and chitin signaling during innate immunity. Acts as an adapter for LYP4 and LYP6 and mediates signal transduction from the extracellular to intracellular spaces. Participates in the activation of defense genes during response to PGN and chitin. Phosphorylates the downstream partner RLCK185 in response to chitin elicitation. This Oryza sativa subsp. japonica (Rice) protein is Chitin elicitor receptor kinase 1.